A 136-amino-acid polypeptide reads, in one-letter code: Protein NrdI (136 aa).

The protein belongs to the NrdI family.

Probably involved in ribonucleotide reductase function. This Citrobacter koseri (strain ATCC BAA-895 / CDC 4225-83 / SGSC4696) protein is Protein NrdI.